Reading from the N-terminus, the 171-residue chain is 3-hydroxydecanoyl-[acyl-carrier-protein] dehydratase (171 aa).

The active site involves H70.

The protein belongs to the thioester dehydratase family. FabA subfamily. Homodimer.

It is found in the cytoplasm. It carries out the reaction a (3R)-hydroxyacyl-[ACP] = a (2E)-enoyl-[ACP] + H2O. The catalysed reaction is (3R)-hydroxydecanoyl-[ACP] = (2E)-decenoyl-[ACP] + H2O. It catalyses the reaction (2E)-decenoyl-[ACP] = (3Z)-decenoyl-[ACP]. The protein operates within lipid metabolism; fatty acid biosynthesis. Necessary for the introduction of cis unsaturation into fatty acids. Catalyzes the dehydration of (3R)-3-hydroxydecanoyl-ACP to E-(2)-decenoyl-ACP and then its isomerization to Z-(3)-decenoyl-ACP. Can catalyze the dehydratase reaction for beta-hydroxyacyl-ACPs with saturated chain lengths up to 16:0, being most active on intermediate chain length. The sequence is that of 3-hydroxydecanoyl-[acyl-carrier-protein] dehydratase from Shewanella oneidensis (strain ATCC 700550 / JCM 31522 / CIP 106686 / LMG 19005 / NCIMB 14063 / MR-1).